Here is a 383-residue protein sequence, read N- to C-terminus: Xylose/arabinose import ATP-binding protein XacK (383 aa).

Residues 4–240 (LTLDDVTKVY…PNNLFVAGFI (237 aa)) form the ABC transporter domain. 41 to 48 (GPSGCGKS) provides a ligand contact to ATP.

Belongs to the ABC transporter superfamily. Carbohydrate uptake transporter-1 (CUT1) (TC 3.A.1.1) family. The complex is composed of two ATP-binding proteins (XacJ and XacK), two transmembrane proteins (XacH and XacI) and a solute-binding protein (XacG).

It is found in the cell membrane. It catalyses the reaction D-xylose(out) + ATP + H2O = D-xylose(in) + ADP + phosphate + H(+). It carries out the reaction L-arabinose(out) + ATP + H2O = L-arabinose(in) + ADP + phosphate + H(+). In terms of biological role, part of the ABC transporter complex XacGHIJK involved in the uptake of xylose and arabinose. Responsible for energy coupling to the transport system. This is Xylose/arabinose import ATP-binding protein XacK from Haloferax volcanii (strain ATCC 29605 / DSM 3757 / JCM 8879 / NBRC 14742 / NCIMB 2012 / VKM B-1768 / DS2) (Halobacterium volcanii).